A 281-amino-acid polypeptide reads, in one-letter code: Diaminopimelate epimerase (281 aa).

The substrate site is built by Asn14 and Asn65. The Proton donor role is filled by Cys74. Substrate is bound by residues 75–76, Asn165, Asn198, and 216–217; these read GN and ER. Cys225 functions as the Proton acceptor in the catalytic mechanism. A substrate-binding site is contributed by 226 to 227; sequence GT.

Belongs to the diaminopimelate epimerase family. Homodimer.

It localises to the cytoplasm. The enzyme catalyses (2S,6S)-2,6-diaminopimelate = meso-2,6-diaminopimelate. The protein operates within amino-acid biosynthesis; L-lysine biosynthesis via DAP pathway; DL-2,6-diaminopimelate from LL-2,6-diaminopimelate: step 1/1. In terms of biological role, catalyzes the stereoinversion of LL-2,6-diaminopimelate (L,L-DAP) to meso-diaminopimelate (meso-DAP), a precursor of L-lysine and an essential component of the bacterial peptidoglycan. This is Diaminopimelate epimerase from Leptospira borgpetersenii serovar Hardjo-bovis (strain JB197).